The chain runs to 382 residues: E3 ubiquitin-protein ligase RNF133 (382 aa).

The 103-residue stretch at 65-167 (SSILKRVAGV…IKGMEILHLI (103 aa)) folds into the PA domain. Residues 190 to 210 (YFVSFMIVTTATLAYFTFYHI) form a helical membrane-spanning segment. The RING-type; atypical zinc-finger motif lies at 256-297 (CVICFEAYKPNEIVRILTCKHFFHKNCIDPWILAHGTCPMCK). Residues 328–382 (TLSPVEEETNYELPPARTSSKVTHVQEHPTSSANAGSQPPEAEETSHPSHGQQVL) are disordered. Over residues 344-364 (RTSSKVTHVQEHPTSSANAGS) the composition is skewed to polar residues.

Interacts with E3 ligase UBE2J1. Post-translationally, auto-ubiquitinated. In terms of tissue distribution, expression is testis-specific.

The protein resides in the endoplasmic reticulum membrane. It carries out the reaction S-ubiquitinyl-[E2 ubiquitin-conjugating enzyme]-L-cysteine + [acceptor protein]-L-lysine = [E2 ubiquitin-conjugating enzyme]-L-cysteine + N(6)-ubiquitinyl-[acceptor protein]-L-lysine.. The protein operates within protein modification; protein ubiquitination. Functionally, has E3 ubiquitin-protein ligase activity. Plays a role in male fecundity through the interaction with the E2 ubituitin-protein ligase UBE2J1. This chain is E3 ubiquitin-protein ligase RNF133 (Rnf133), found in Mus musculus (Mouse).